Reading from the N-terminus, the 484-residue chain is SPI-2 type 3 secretion system translocon protein SctE (484 aa).

Transmembrane regions (helical) follow at residues 85 to 105 and 152 to 172; these read FLQTNPAVLSMMMTSLILNVF and GIFGAIFDWITGIFETVIGAL. Coiled coils occupy residues 107-152 and 413-457; these read NNAQ…RKAG and NTEK…LYKG.

Belongs to the SctE/SipB/YopB family. The core secretion machinery of the T3SS is composed of approximately 20 different proteins, including cytoplasmic components, a base, an export apparatus and a needle. This subunit is involved in the formation of a pore, called the translocon, in host membrane. May form a complex with SseB and SseD/SctB2. SseB is required for correct localization of SseC/SctE2 on the bacterial cell surface.

It localises to the secreted. It is found in the cell surface. The protein localises to the host membrane. In terms of biological role, component of the type III secretion system 2 (SPI-2 T3SS), also called injectisome, which is used to inject bacterial effector proteins into eukaryotic host cells. SseC/SctE2 and SseD/SctB2 are inserted into the host membrane where they form a pore and allow the translocation of effector proteins into the cytosol of target cells. Functionally, required for the translocation of SPI-2 effector proteins. Required for systemic Salmonella infection of the mouse. Essential for SpvB-induced actin depolymerization in the host cell cytoplasm. The chain is SPI-2 type 3 secretion system translocon protein SctE from Salmonella typhimurium (strain LT2 / SGSC1412 / ATCC 700720).